Reading from the N-terminus, the 25-residue chain is Large ribosomal subunit protein uL29 (25 aa).

It belongs to the universal ribosomal protein uL29 family.

This is Large ribosomal subunit protein uL29 (rpmC) from Brevundimonas vesicularis (Pseudomonas vesicularis).